The following is a 514-amino-acid chain: Maturase K (514 aa).

This sequence belongs to the intron maturase 2 family. MatK subfamily.

It localises to the plastid. It is found in the chloroplast. Functionally, usually encoded in the trnK tRNA gene intron. Probably assists in splicing its own and other chloroplast group II introns. The polypeptide is Maturase K (Encephalartos altensteinii (Altenstein's bread tree)).